Consider the following 255-residue polypeptide: DNA repair protein RecO (255 aa).

It belongs to the RecO family.

Functionally, involved in DNA repair and RecF pathway recombination. The protein is DNA repair protein RecO of Listeria monocytogenes serotype 4b (strain CLIP80459).